Here is a 338-residue protein sequence, read N- to C-terminus: Phenylalanine--tRNA ligase alpha subunit (338 aa).

Mg(2+) is bound at residue glutamate 252.

Belongs to the class-II aminoacyl-tRNA synthetase family. Phe-tRNA synthetase alpha subunit type 1 subfamily. As to quaternary structure, tetramer of two alpha and two beta subunits. It depends on Mg(2+) as a cofactor.

The protein localises to the cytoplasm. It carries out the reaction tRNA(Phe) + L-phenylalanine + ATP = L-phenylalanyl-tRNA(Phe) + AMP + diphosphate + H(+). The chain is Phenylalanine--tRNA ligase alpha subunit from Pseudomonas putida (strain ATCC 700007 / DSM 6899 / JCM 31910 / BCRC 17059 / LMG 24140 / F1).